The primary structure comprises 160 residues: Ribosomal RNA large subunit methyltransferase H (160 aa).

S-adenosyl-L-methionine-binding residues include Leu76 and Gly108.

The protein belongs to the RNA methyltransferase RlmH family. As to quaternary structure, homodimer.

Its subcellular location is the cytoplasm. It carries out the reaction pseudouridine(1915) in 23S rRNA + S-adenosyl-L-methionine = N(3)-methylpseudouridine(1915) in 23S rRNA + S-adenosyl-L-homocysteine + H(+). Functionally, specifically methylates the pseudouridine at position 1915 (m3Psi1915) in 23S rRNA. The chain is Ribosomal RNA large subunit methyltransferase H from Rhodopseudomonas palustris (strain TIE-1).